We begin with the raw amino-acid sequence, 134 residues long: Small ribosomal subunit protein uS8 (134 aa).

Belongs to the universal ribosomal protein uS8 family. In terms of assembly, part of the 30S ribosomal subunit. Contacts proteins S5 and S12.

In terms of biological role, one of the primary rRNA binding proteins, it binds directly to 16S rRNA central domain where it helps coordinate assembly of the platform of the 30S subunit. The protein is Small ribosomal subunit protein uS8 of Thermotoga maritima (strain ATCC 43589 / DSM 3109 / JCM 10099 / NBRC 100826 / MSB8).